A 501-amino-acid chain; its full sequence is Beta-glucosidase 25 (501 aa).

A signal peptide spans 1–19 (MSLLTLVHILVSFSACVEA). Residue Gln39 participates in a beta-D-glucoside binding. N-linked (GlcNAc...) asparagine glycosylation is present at Asn107. A beta-D-glucoside contacts are provided by residues His140 and 185 to 186 (NE). Glu186 acts as the Proton donor in catalysis. Residues Cys205 and Cys213 are joined by a disulfide bond. A beta-D-glucoside is bound by residues Tyr329, Glu402, Trp452, 459–460 (EW), and Phe468. Glu402 (nucleophile) is an active-site residue. The N-linked (GlcNAc...) asparagine glycan is linked to Asn478.

The protein belongs to the glycosyl hydrolase 1 family.

It carries out the reaction Hydrolysis of terminal, non-reducing beta-D-glucosyl residues with release of beta-D-glucose.. This chain is Beta-glucosidase 25 (BGLU25), found in Oryza sativa subsp. japonica (Rice).